Here is a 238-residue protein sequence, read N- to C-terminus: Large ribosomal subunit protein uL1 (238 aa).

It belongs to the universal ribosomal protein uL1 family. In terms of assembly, part of the 50S ribosomal subunit.

In terms of biological role, binds directly to 23S rRNA. The L1 stalk is quite mobile in the ribosome, and is involved in E site tRNA release. Its function is as follows. Protein L1 is also a translational repressor protein, it controls the translation of the L11 operon by binding to its mRNA. The sequence is that of Large ribosomal subunit protein uL1 from Salinispora tropica (strain ATCC BAA-916 / DSM 44818 / JCM 13857 / NBRC 105044 / CNB-440).